The sequence spans 122 residues: Protein preY, mitochondrial (122 aa).

The transit peptide at 1–40 (MLAVRAWGRTYNTLVQRKLNAACPTGALPAVTLRPLHCSL) directs the protein to the mitochondrion. Residues 56–102 (DPTLLQFLVCPLSRKSLRYEESTNELINDELGIAYPIVDGIPNMIPQ) enclose the TRM112 domain.

Belongs to the PREY family.

It is found in the mitochondrion. In terms of biological role, in mitochondria, S-adenosylmethionine-dependent methyltransferase chaperone that supports both coenzyme Q biosynthesis and NADH:ubiquinone oxidoreductase complex (complex I, MT-ND1) assembly. The sequence is that of Protein preY, mitochondrial (pyurf) from Xenopus tropicalis (Western clawed frog).